Reading from the N-terminus, the 884-residue chain is Protein translocase subunit SecA (884 aa).

ATP contacts are provided by residues Gln-83, 101 to 105, and Asp-491; that span reads GEGKT.

This sequence belongs to the SecA family.

The protein localises to the plastid. It is found in the chloroplast stroma. Its subcellular location is the chloroplast thylakoid membrane. It carries out the reaction ATP + H2O + cellular proteinSide 1 = ADP + phosphate + cellular proteinSide 2.. Has a central role in coupling the hydrolysis of ATP to the transfer of proteins across the thylakoid membrane. The protein is Protein translocase subunit SecA of Porphyra purpurea (Red seaweed).